Reading from the N-terminus, the 285-residue chain is uncharacterized protein (285 aa).

Residues methionine 1 to aspartate 25 form a disordered region. Residue isoleucine 45–valine 69 participates in NADP(+) binding. Residue serine 177 participates in substrate binding. The active-site Proton acceptor is tyrosine 190.

This sequence belongs to the short-chain dehydrogenases/reductases (SDR) family.

This is an uncharacterized protein from Bacillus subtilis (strain 168).